Consider the following 58-residue polypeptide: Large ribosomal subunit protein bL32 (58 aa).

The segment covering 1 to 19 (MAVPKRKTSKSNTKMRRAA) has biased composition (basic residues). Residues 1–22 (MAVPKRKTSKSNTKMRRAANSK) are disordered.

Belongs to the bacterial ribosomal protein bL32 family.

This Clostridioides difficile (strain 630) (Peptoclostridium difficile) protein is Large ribosomal subunit protein bL32.